A 97-amino-acid polypeptide reads, in one-letter code: MVFFFTSCTIQSAIEQKKTVEEILGKIGESEDKTNSRGQPATMKEDEVEDNPLKDVYKDYFLVGAAINGYSVETAAINHPGMAAILKKTLTVQPYLI.

The segment at 27-50 (IGESEDKTNSRGQPATMKEDEVED) is disordered.

This is an uncharacterized protein from Caldicellulosiruptor saccharolyticus (Caldocellum saccharolyticum).